Consider the following 430-residue polypeptide: MSYTKLLTQLSFPNRISGPILETSLSDVSIGEICNIQAGIESNEIVARAQVVGFHDEKTILSLIGNSRGLSRQTLIKPTAQFLHTQVGRGLLGAVVNPLGEVTDKFAVTDNSEILYRPVDNAPPLYSERAAIEKPFLTGIKVIDSLLTCGEGQRMGIFASAGCGKTFLMNMLIEHSGADIYVIGLIGERGREVTETVDYLKNSEKKSRCVLVYATSDYSSVDRCNAAYIATAIAEFFRTEGHKVALFIDSLTRYARALRDVALAAGESPARRGYPVSVFDSLPRLLERPGKLKAGGSITAFYTVLLEDDDFADPLAEEVRSILDGHIYLSRNLAQKGQFPAIDSLKSISRVFTQVVDEKHRIMAAAFRELLSEIEELRTIIDFGEYKPGENASQDKIYNKISVVESFLKQDYRLGFTYEQTMELIGETIR.

162–167 (GCGKTF) serves as a coordination point for ATP.

This sequence belongs to the ATPase alpha/beta chains family. T3SS ATPase subfamily. In terms of assembly, the core secretion machinery of the T3SS is composed of approximately 20 different proteins, including cytoplasmic components, a base, an export apparatus and a needle. This subunit is part of the cytosolic complex. Forms homohexamers. Interacts directly with MxiN/SctL (stator protein) and Spa13/SctO (stalk protein). Can form a soluble complex with Spa33/SctQ, MxiN/SctL and MxiK/SctK.

It is found in the cytoplasm. It carries out the reaction ATP + H2O + cellular proteinSide 1 = ADP + phosphate + cellular proteinSide 2.. With respect to regulation, oligomerization increases ATPase activity. Monomeric forms exhibit low-level ATPase activity by forming short-lived oligomers with active site contributions from at least two protomers. In contrast, oligomers exhibit enhanced ATP hydrolysis rates that likely result from multiple preformed active sites within the oligomeric complex. Oligomerization is important for both enzyme activation and T3SS function. Activity is regulated by MxiN/SctL, which differentially regulates the activity of the monomer and the oligomer: it up-regulates the ATPase activity of the monomer, while it down-regulates the activity of the oligomer. Functionally, ATPase component of the type III secretion system (T3SS), also called injectisome, which is used to inject bacterial effector proteins into eukaryotic host cells. Acts as a molecular motor to provide the energy that is required for the export of proteins. Required for type III secretion apparatus (T3SA) formation, proper protein secretion, host cell invasion and virulence. May play a critical role in T3SS substrate recognition, disassembly of the effector/chaperone complex and unfolding of the effector in an ATP-dependent manner prior to secretion. The polypeptide is Type 3 secretion system ATPase (Shigella flexneri).